Consider the following 1236-residue polypeptide: Calcium-activated potassium channel subunit alpha-1 (1236 aa).

Positions 1–21 are enriched in gly residues; it reads MANGGGGGGGSSGGGGGGGGS. The segment at 1–61 is disordered; sequence MANGGGGGGG…SSSSSSSSSV (61 aa). Over 1–86 the chain is Extracellular; it reads MANGGGGGGG…VPCDSRGQRM (86 aa). Over residues 39 to 60 the composition is skewed to low complexity; sequence SSSSSSSSSSSSSSSSSSSSSS. Residues 87–107 form a helical membrane-spanning segment; that stretch reads WWAFLASSMVTFFGGLFIILL. Residues 108 to 178 are Cytoplasmic-facing; the sequence is WRTLKYLWTV…MISAQTLTGR (71 aa). Residues C118, C119, and C121 are each lipidated (S-palmitoyl cysteine). Residues 179–199 form a helical membrane-spanning segment; sequence VLVVLVFALSIGALVIYFIDS. The Extracellular segment spans residues 200-214; that stretch reads SNPIESCQNFYKDFT. Residues 215 to 235 form a helical membrane-spanning segment; that stretch reads LQIDMAFNVFFLLYFGLRFIA. Over 236–239 the chain is Cytoplasmic; it reads ANDK. Residues 240–260 traverse the membrane as a helical segment; sequence LWFWLEVNSVVDFFTVPPVFV. At 261 to 264 the chain is on the extracellular side; sequence SVYL. A helical membrane pass occupies residues 265 to 285; it reads NRSWLGLRFLRALRLIQFSEI. Residues 286–300 lie on the Cytoplasmic side of the membrane; the sequence is LQFLNILKTSNSIKL. The chain crosses the membrane as a helical span at residues 301–321; that stretch reads VNLLSIFISTWLTAAGFIHLV. Residues 322-335 lie on the Extracellular side of the membrane; sequence ENSGDPWENFQNNQ. Residues 336–358 constitute an intramembrane region (pore-forming); the sequence is ALTYWECVYLLMVTMSTVGYGDV. The short motif at 352-355 is the Selectivity for potassium element; the sequence is TVGY. Over 359-367 the chain is Extracellular; that stretch reads YAKTTLGRL. The helical transmembrane segment at 368–388 threads the bilayer; it reads FMVFFILGGLAMFASYVPEII. The Cytoplasmic portion of the chain corresponds to 389–1236; it reads ELIGNRKKYG…KQKYVQEERL (848 aa). An RCK N-terminal 1 domain is found at 407–549; sequence RKHIVVCGHI…WNWKEGDDAI (143 aa). E439, Q462, and E464 together coordinate Mg(2+). Residues 556–576 are segment S7; it reads LGFIAQSCLAQGLSTMLANLF. The segment at 613-633 is segment S8; the sequence is LSFPTVCELCFVKLKLLMIAI. The tract at residues 677–681 is heme-binding motif; that stretch reads CKACH. Positions 757 to 787 are disordered; the sequence is EDEQPSTLSPKKKQRNGGMRNSPNTSPKLMR. A Phosphothreonine modification is found at T763. S765, S778, and S782 each carry phosphoserine. The segment S9 stretch occupies residues 837-857; sequence VLSGHVVVCIFGDVSSALIGL. Positions 839 to 983 constitute an RCK N-terminal 2 domain; sequence SGHVVVCIFG…MDRSSPDNSP (145 aa). T970 is subject to Phosphothreonine. Residues S978 and S982 each carry the phosphoserine modification. The Calcium bowl motif lies at 1003 to 1025; sequence TELVNDTNVQFLDQDDDDDPDTE. Ca(2+)-binding residues include Q1012, D1015, D1018, and D1020. The segment S10 stretch occupies residues 1032–1052; the sequence is FACGTAFAVSVLDSLMSATYF. Residues 1186-1211 are compositionally biased toward low complexity; it reads RASLSHSSHSSQSSSKKSSSVHSIPS. Residues 1186-1236 are disordered; that stretch reads RASLSHSSHSSQSSSKKSSSVHSIPSTANRQNRPKSRESRDKQKYVQEERL. Residues 1220-1236 are compositionally biased toward basic and acidic residues; the sequence is KSRESRDKQKYVQEERL. S1221 and S1224 each carry phosphoserine.

It belongs to the potassium channel family. Calcium-activated (TC 1.A.1.3) subfamily. KCa1.1/KCNMA1 sub-subfamily. As to quaternary structure, homotetramer; which constitutes the calcium-activated potassium channel. Interacts with RAB11B. Interacts with beta subunits KCNMB1, KCNMB2, KCNMB3 and KCNMB4. Interacts with gamma subunits LRRC26, LRRC38, LRRC52 and LRRC55. Beta and gamma subunits are accessory, and modulate its activity. Post-translationally, phosphorylated. Phosphorylation by kinases such as PKA and/or PKG. In smooth muscles, phosphorylation affects its activity. Palmitoylation by ZDHHC22 and ZDHHC23 within the intracellular linker between the S0 and S1 transmembrane domains regulates localization to the plasma membrane. Depalmitoylated by LYPLA1 and LYPLAL1, leading to retard exit from the trans-Golgi network. As to expression, widely expressed. Except in myocytes, it is almost ubiquitously expressed.

The protein resides in the cell membrane. It carries out the reaction K(+)(in) = K(+)(out). Its activity is regulated as follows. Ethanol and carbon monoxide-bound heme increase channel activation. Heme inhibits channel activation. Functionally, potassium channel activated by both membrane depolarization or increase in cytosolic Ca(2+) that mediates export of K(+). It is also activated by the concentration of cytosolic Mg(2+). Its activation dampens the excitatory events that elevate the cytosolic Ca(2+) concentration and/or depolarize the cell membrane. It therefore contributes to repolarization of the membrane potential. Plays a key role in controlling excitability in a number of systems, such as regulation of the contraction of smooth muscle, the tuning of hair cells in the cochlea, regulation of transmitter release, and innate immunity. In smooth muscles, its activation by high level of Ca(2+), caused by ryanodine receptors in the sarcoplasmic reticulum, regulates the membrane potential. In cochlea cells, its number and kinetic properties partly determine the characteristic frequency of each hair cell and thereby helps to establish a tonotopic map. Kinetics of KCNMA1 channels are determined by alternative splicing, phosphorylation status and its combination with modulating beta subunits. Highly sensitive to both iberiotoxin (IbTx) and charybdotoxin (CTX). Possibly induces sleep when activated by melatonin and through melatonin receptor MTNR1A-dependent dissociation of G-beta and G-gamma subunits, leading to increased sensitivity to Ca(2+) and reduced synaptic transmission. Potassium channel activated by both membrane depolarization or increase in cytosolic Ca(2+) that mediates export of K(+). The polypeptide is Calcium-activated potassium channel subunit alpha-1 (Homo sapiens (Human)).